An 80-amino-acid polypeptide reads, in one-letter code: Defensin-like protein 1 (80 aa).

An N-terminal signal peptide occupies residues 1 to 29 (MAKFASIIALLFAALVLFAAFEAPTMVEA). Glutamine 30 is subject to Pyrrolidone carboxylic acid. 4 disulfides stabilise this stretch: cysteine 33/cysteine 80, cysteine 44/cysteine 65, cysteine 50/cysteine 74, and cysteine 54/cysteine 76.

The protein belongs to the DEFL family. As to quaternary structure, forms oligomers in its native state.

It localises to the secreted. Its function is as follows. Possesses antifungal activity sensitive to inorganic cations. The protein is Defensin-like protein 1 (AFP1) of Raphanus sativus (Radish).